We begin with the raw amino-acid sequence, 335 residues long: Phosphate acyltransferase (335 aa).

The protein belongs to the PlsX family. As to quaternary structure, homodimer. Probably interacts with PlsY.

Its subcellular location is the cytoplasm. The catalysed reaction is a fatty acyl-[ACP] + phosphate = an acyl phosphate + holo-[ACP]. It participates in lipid metabolism; phospholipid metabolism. Functionally, catalyzes the reversible formation of acyl-phosphate (acyl-PO(4)) from acyl-[acyl-carrier-protein] (acyl-ACP). This enzyme utilizes acyl-ACP as fatty acyl donor, but not acyl-CoA. The sequence is that of Phosphate acyltransferase from Leptospira interrogans serogroup Icterohaemorrhagiae serovar copenhageni (strain Fiocruz L1-130).